The following is a 213-amino-acid chain: Uracil phosphoribosyltransferase (213 aa).

5-phospho-alpha-D-ribose 1-diphosphate is bound by residues arginine 78, arginine 103, and 130–138 (DPMLATGGT). Uracil contacts are provided by residues isoleucine 197 and 202–204 (GDA). Aspartate 203 contacts 5-phospho-alpha-D-ribose 1-diphosphate.

Belongs to the UPRTase family. Mg(2+) is required as a cofactor.

It catalyses the reaction UMP + diphosphate = 5-phospho-alpha-D-ribose 1-diphosphate + uracil. Its pathway is pyrimidine metabolism; UMP biosynthesis via salvage pathway; UMP from uracil: step 1/1. With respect to regulation, allosterically activated by GTP. In terms of biological role, catalyzes the conversion of uracil and 5-phospho-alpha-D-ribose 1-diphosphate (PRPP) to UMP and diphosphate. The sequence is that of Uracil phosphoribosyltransferase from Nocardioides sp. (strain ATCC BAA-499 / JS614).